The sequence spans 371 residues: Hsc70-interacting protein (371 aa).

Residues 38–80 (MGGKVPPATHKAKSEENTKEEKRDKTTEENIKTEELSSEESDL) form a disordered region. Over residues 49 to 72 (AKSEENTKEEKRDKTTEENIKTEE) the composition is skewed to basic and acidic residues. TPR repeat units follow at residues 113–146 (ANEKKGAAIEALNDGELQKAIDLFTDAIKLNPRL), 147–180 (AILYAKRASVFVKLQKPNAAIRDCDRAIEINPDS), and 181–214 (AQPYKWRGKAHRLLGHWEEAAHDLALACKLDYDE). Residues 255 to 271 (KAREEHERAQREEEARR) show a composition bias toward basic and acidic residues. Residues 255-296 (KAREEHERAQREEEARRQSGSQYGSFPGGFPGGMPGNFPGGM) form a disordered region. Residues 280 to 296 (FPGGFPGGMPGNFPGGM) show a composition bias toward gly residues. The 40-residue stretch at 321–360 (DPEVLAAMQDPEVMVAFQDVAQNPSNMSKYQSNPKVMNLI) folds into the STI1 domain. Ser348 is subject to Phosphoserine; by GRK5. N6-acetyllysine is present on residues Lys355 and Lys362.

Belongs to the FAM10 family. Homotetramer. Interacts with HSC70 as well as DNAJ homologs and HSP90. Interacts (via the C-terminus 302- 318 AA) with GRK5.

It localises to the cytoplasm. One HIP oligomer binds the ATPase domains of at least two HSC70 molecules dependent on activation of the HSC70 ATPase by HSP40. Stabilizes the ADP state of HSC70 that has a high affinity for substrate protein. Through its own chaperone activity, it may contribute to the interaction of HSC70 with various target proteins. The polypeptide is Hsc70-interacting protein (St13) (Mus musculus (Mouse)).